The primary structure comprises 390 residues: GTPase Obg/CgtA (390 aa).

The Obg domain maps to 1 to 159 (MKFVDEAVIK…RDIRLELLLL (159 aa)). The OBG-type G domain maps to 160-333 (ADVGMLGMPN…LCMKLAEFMD (174 aa)). Residues 166–173 (GMPNAGKS), 191–195 (FTTLV), 213–216 (DIPG), 283–286 (NKVD), and 314–316 (SAA) contribute to the GTP site. Mg(2+) contacts are provided by S173 and T193.

Belongs to the TRAFAC class OBG-HflX-like GTPase superfamily. OBG GTPase family. In terms of assembly, monomer. Interacts with SpoT (AC Q9KNM2) in a yeast 2-hybrid assay. Requires Mg(2+) as cofactor.

It localises to the cytoplasm. In terms of biological role, depletion experiments lead to gene down regulation and a dramatic increase in ppGpp levels, like those seen in the stringent response. There is no change in cell morphology in depletion experiments, but cells are very sensitive to the DNA-damaging agent hydroxyurea and are very elongated. Overexpression reduces growth and leads to elongated cells. Overexpression of proteins with C-terminal deletions of 29 or 62 amino acids showed fewer elongated cells. An essential GTPase which binds GTP, GDP and possibly (p)ppGpp with moderate affinity, with high nucleotide exchange rates and a fairly low GTP hydrolysis rate. It may play a role in control of the cell cycle, stress response, ribosome biogenesis and in those bacteria that undergo differentiation, in morphogenesis control. GTPase activity is stimulated by 50S ribosomal subunits. The polypeptide is GTPase Obg/CgtA (Vibrio cholerae serotype O1 (strain ATCC 39315 / El Tor Inaba N16961)).